Here is a 276-residue protein sequence, read N- to C-terminus: 2,3,4,5-tetrahydropyridine-2,6-dicarboxylate N-succinyltransferase (276 aa).

2 residues coordinate substrate: Arg-100 and Asp-137.

Belongs to the transferase hexapeptide repeat family. In terms of assembly, homotrimer.

Its subcellular location is the cytoplasm. It catalyses the reaction (S)-2,3,4,5-tetrahydrodipicolinate + succinyl-CoA + H2O = (S)-2-succinylamino-6-oxoheptanedioate + CoA. The protein operates within amino-acid biosynthesis; L-lysine biosynthesis via DAP pathway; LL-2,6-diaminopimelate from (S)-tetrahydrodipicolinate (succinylase route): step 1/3. The sequence is that of 2,3,4,5-tetrahydropyridine-2,6-dicarboxylate N-succinyltransferase from Zymomonas mobilis subsp. mobilis (strain ATCC 31821 / ZM4 / CP4).